Reading from the N-terminus, the 79-residue chain is Moronecidin (79 aa).

The signal sequence occupies residues Met-1 to Ala-22. At Gly-44 the chain carries Glycine amide. The tract at residues Gly-45–Asp-79 is disordered. A propeptide spanning residues Ala-47–Asp-79 is cleaved from the precursor. Positions Gln-52–Gln-69 are enriched in low complexity.

In terms of tissue distribution, expressed in mast cells in gill, skin and gut, and in lining blood vessels in the viscera. Also in intestine, spleen, anterior kidney, and blood cells.

The protein localises to the secreted. Antimicrobial peptide with broad-spectrum activity against Gram-positive and Gram-negative bacteria as well as against a variety of fungi. Rapidly inactivates channel catfish herpesvirus (ED(50)=4 uM) and frog virus 3 (ED(50)=13 uM) over a wide temperature range. Seems to disrupt the membranes by adopting an alpha helical conformation and forming toroidal pores. Has hemolytic activity. In Morone saxatilis (Striped bass), this protein is Moronecidin.